A 244-amino-acid polypeptide reads, in one-letter code: Phosphoadenosine 5'-phosphosulfate reductase (244 aa).

Cys239 functions as the Nucleophile; cysteine thiosulfonate intermediate in the catalytic mechanism.

The protein belongs to the PAPS reductase family. CysH subfamily.

Its subcellular location is the cytoplasm. The catalysed reaction is [thioredoxin]-disulfide + sulfite + adenosine 3',5'-bisphosphate + 2 H(+) = [thioredoxin]-dithiol + 3'-phosphoadenylyl sulfate. It functions in the pathway sulfur metabolism; hydrogen sulfide biosynthesis; sulfite from sulfate: step 3/3. Its function is as follows. Catalyzes the formation of sulfite from phosphoadenosine 5'-phosphosulfate (PAPS) using thioredoxin as an electron donor. The chain is Phosphoadenosine 5'-phosphosulfate reductase from Sodalis glossinidius (strain morsitans).